The following is a 352-amino-acid chain: tRNA pseudouridine synthase D (352 aa).

Catalysis depends on Asp81, which acts as the Nucleophile. The TRUD domain maps to 157–303; it reads GVPNYFGLQR…MAHERRILRL (147 aa).

Belongs to the pseudouridine synthase TruD family.

It catalyses the reaction uridine(13) in tRNA = pseudouridine(13) in tRNA. Responsible for synthesis of pseudouridine from uracil-13 in transfer RNAs. In Ectopseudomonas mendocina (strain ymp) (Pseudomonas mendocina), this protein is tRNA pseudouridine synthase D.